A 360-amino-acid chain; its full sequence is Mannose-1-phosphate guanylyltransferase catalytic subunit beta (360 aa).

The interval 2–222 (KALILVGGYG…QGFWMDIGQP (221 aa)) is substrate-binding domain. Asp110 is a binding site for GDP-alpha-D-mannose. Asp110 contributes to the Mg(2+) binding site. The active site involves Lys162. GDP-alpha-D-mannose is bound at residue Asp218. A Mg(2+)-binding site is contributed by Asp218. Positions 245–360 (CSGPGIVGNV…ESVPEPRIIM (116 aa)) are hexapeptide repeat domain.

It belongs to the transferase hexapeptide repeat family. In terms of assembly, component of the GMPPA-GMPPB mannose-1-phosphate guanylyltransferase complex composed of 4 GMPPA subunits and 8 GMPPB subunits; the complex is organized into three layers, a central layer made up of 2 GMPPA dimers sandwiched between two layers each made up of 2 GMPPB dimers. GMPPB catalytic activity is reduced when part of the complex and binding of GDP-alpha-D-Mannose by GMPPA induces allosteric feedback inhibition of GMPPB. Requires Mg(2+) as cofactor. In terms of tissue distribution, ubiquitously expressed, including in brain and skeletal muscle. Weakly expressed with highest expression in skeletal muscle, brain and gonads.

It is found in the cytoplasm. The enzyme catalyses alpha-D-mannose 1-phosphate + GTP + H(+) = GDP-alpha-D-mannose + diphosphate. It participates in nucleotide-sugar biosynthesis; GDP-alpha-D-mannose biosynthesis; GDP-alpha-D-mannose from alpha-D-mannose 1-phosphate (GTP route): step 1/1. Enzyme activity is reduced by incorporation into the GMPPA-GMPPB mannose-1-phosphate guanylyltransferase complex. Allosterically inhibited, when part of the GMPPA-GMPPB complex, by GDP-alpha-D-mannose binding to GMPPA. Its function is as follows. Catalytic subunit of the GMPPA-GMPPB mannose-1-phosphate guanylyltransferase complex. Catalyzes the formation of GDP-mannose, an essential precursor of glycan moieties of glycoproteins and glycolipids. Can catalyze the reverse reaction in vitro. Together with GMPPA regulates GDP-alpha-D-mannose levels. The protein is Mannose-1-phosphate guanylyltransferase catalytic subunit beta of Homo sapiens (Human).